A 142-amino-acid polypeptide reads, in one-letter code: uncharacterized protein (142 aa).

This is an uncharacterized protein from Methanocaldococcus jannaschii (strain ATCC 43067 / DSM 2661 / JAL-1 / JCM 10045 / NBRC 100440) (Methanococcus jannaschii).